A 333-amino-acid polypeptide reads, in one-letter code: Foldase protein PrsA (333 aa).

The N-terminal stretch at 1 to 21 is a signal peptide; it reads MKKRTIATGLVTLLSIVTLAA. The N-palmitoyl cysteine moiety is linked to residue C22. C22 carries the S-diacylglycerol cysteine lipid modification. Residues 144 to 237 enclose the PpiC domain; sequence KPEVTAQVIQ…PVYYIVKITK (94 aa). The disordered stretch occupies residues 296–333; it reads AASGSGSSGSTTTTTAASSAATTAADDQTTAAETTAAE.

It belongs to the PrsA family.

It localises to the cell membrane. It catalyses the reaction [protein]-peptidylproline (omega=180) = [protein]-peptidylproline (omega=0). In terms of biological role, plays a major role in protein secretion by helping the post-translocational extracellular folding of several secreted proteins. The sequence is that of Foldase protein PrsA from Streptococcus mutans serotype c (strain ATCC 700610 / UA159).